A 600-amino-acid polypeptide reads, in one-letter code: Proline--tRNA ligase (600 aa).

The protein belongs to the class-II aminoacyl-tRNA synthetase family. ProS type 1 subfamily. Homodimer.

The protein localises to the cytoplasm. The catalysed reaction is tRNA(Pro) + L-proline + ATP = L-prolyl-tRNA(Pro) + AMP + diphosphate. Its function is as follows. Catalyzes the attachment of proline to tRNA(Pro) in a two-step reaction: proline is first activated by ATP to form Pro-AMP and then transferred to the acceptor end of tRNA(Pro). As ProRS can inadvertently accommodate and process non-cognate amino acids such as alanine and cysteine, to avoid such errors it has two additional distinct editing activities against alanine. One activity is designated as 'pretransfer' editing and involves the tRNA(Pro)-independent hydrolysis of activated Ala-AMP. The other activity is designated 'posttransfer' editing and involves deacylation of mischarged Ala-tRNA(Pro). The misacylated Cys-tRNA(Pro) is not edited by ProRS. This chain is Proline--tRNA ligase, found in Acaryochloris marina (strain MBIC 11017).